An 881-amino-acid chain; its full sequence is Mechanosensitive ion channel protein 5 (881 aa).

Composition is skewed to basic and acidic residues over residues 1–12 and 48–59; these read MAAVDSTDRRDF and DGEKGKNDKKGD. The interval 1-248 is disordered; it reads MAAVDSTDRR…RNGFEEEEEE (248 aa). Positions 115-145 are enriched in polar residues; it reads ELQSNTPPRPATASNTPRRGLTTISESSSPV. Over residues 169 to 179 the composition is skewed to basic and acidic residues; that stretch reads EEGRNRDEAEV. A Phosphoserine modification is found at serine 231. Helical transmembrane passes span 265–285, 309–329, 349–369, 387–407, 642–662, and 677–697; these read LSFWVFLEWISLVLIVTSLVC, VLVLICGRLVSSWIVRIIVFL, KSVQNCLWLGLVLLAWHFLFD, VLVCLLVALIIWLVKTILVKV, IINVVIGIIIIIIWLLILGIA, and VAFVFGNSCKTIFEAIIFLFV. A disordered region spans residues 861-881; that stretch reads PTANPTSSDRIPPSWMQQRGP. Over residues 864 to 881 the composition is skewed to polar residues; sequence NPTSSDRIPPSWMQQRGP.

The protein belongs to the MscS (TC 1.A.23) family.

It is found in the membrane. In terms of biological role, mechanosensitive channel that opens in response to stretch forces in the membrane lipid bilayer. The protein is Mechanosensitive ion channel protein 5 (MSL5) of Arabidopsis thaliana (Mouse-ear cress).